Here is a 433-residue protein sequence, read N- to C-terminus: Enolase (433 aa).

Q163 serves as a coordination point for (2R)-2-phosphoglycerate. The Proton donor role is filled by E205. 3 residues coordinate Mg(2+): D241, E289, and D316. Positions 341, 370, 371, and 392 each coordinate (2R)-2-phosphoglycerate. Residue K341 is the Proton acceptor of the active site.

This sequence belongs to the enolase family. Mg(2+) is required as a cofactor.

It is found in the cytoplasm. The protein localises to the secreted. It localises to the cell surface. It catalyses the reaction (2R)-2-phosphoglycerate = phosphoenolpyruvate + H2O. Its pathway is carbohydrate degradation; glycolysis; pyruvate from D-glyceraldehyde 3-phosphate: step 4/5. Its function is as follows. Catalyzes the reversible conversion of 2-phosphoglycerate (2-PG) into phosphoenolpyruvate (PEP). It is essential for the degradation of carbohydrates via glycolysis. The polypeptide is Enolase (Treponema denticola (strain ATCC 35405 / DSM 14222 / CIP 103919 / JCM 8153 / KCTC 15104)).